Reading from the N-terminus, the 160-residue chain is SsrA-binding protein (160 aa).

Belongs to the SmpB family.

Its subcellular location is the cytoplasm. In terms of biological role, required for rescue of stalled ribosomes mediated by trans-translation. Binds to transfer-messenger RNA (tmRNA), required for stable association of tmRNA with ribosomes. tmRNA and SmpB together mimic tRNA shape, replacing the anticodon stem-loop with SmpB. tmRNA is encoded by the ssrA gene; the 2 termini fold to resemble tRNA(Ala) and it encodes a 'tag peptide', a short internal open reading frame. During trans-translation Ala-aminoacylated tmRNA acts like a tRNA, entering the A-site of stalled ribosomes, displacing the stalled mRNA. The ribosome then switches to translate the ORF on the tmRNA; the nascent peptide is terminated with the 'tag peptide' encoded by the tmRNA and targeted for degradation. The ribosome is freed to recommence translation, which seems to be the essential function of trans-translation. The chain is SsrA-binding protein from Histophilus somni (strain 129Pt) (Haemophilus somnus).